A 505-amino-acid chain; its full sequence is Outer capsid protein VP5 (505 aa).

Residues 1–42 (MGKFTSFLKRAGNATKRALTSDSAKKMYKLAGKTLQRVVESE) form an involved in membrane permeabilization region.

Belongs to the orbivirus VP5 family.

It localises to the virion. Its function is as follows. VP5 protein is one of the two proteins (with VP2) which constitute the virus particle outer capsid. Acts as a membrane permeabilization protein that mediates release of viral particles from endosomal compartments into the cytoplasm. Permeabilization activity is probably negatively regulated by VP2 and is triggered by endosomal degradation of VP2 and exposure to low pH. The polypeptide is Outer capsid protein VP5 (Segment-6) (African horse sickness virus (AHSV)).